The sequence spans 217 residues: Ribosome maturation factor RimM (217 aa).

Positions 115-186 (EDAWYDNQLV…TVTLTPPPGL (72 aa)) constitute a PRC barrel domain. The tract at residues 181 to 217 (TPPPGLFEDLPDDAPAAGDESEPVSPPVTAEETPGGE) is disordered.

Belongs to the RimM family. In terms of assembly, binds ribosomal protein uS19.

The protein localises to the cytoplasm. An accessory protein needed during the final step in the assembly of 30S ribosomal subunit, possibly for assembly of the head region. Essential for efficient processing of 16S rRNA. May be needed both before and after RbfA during the maturation of 16S rRNA. It has affinity for free ribosomal 30S subunits but not for 70S ribosomes. The polypeptide is Ribosome maturation factor RimM (Leifsonia xyli subsp. xyli (strain CTCB07)).